The primary structure comprises 838 residues: MANIRIHEIAKELGYSNKEILEKAKELGFKVTTSSSAVTPEDAAQLYDYVQSGKKPESPEKKDIKQNTQKEAPETQTQQKPIEQEVETKQNIDSTPIKVEPKQESLASSTLSKRRGLVIVKKKKVEVQPIQKQQSEPINKGLEAIFGSSDENLKKKKKEKKPIIATKKENSAKIDLLSAISFSDDISIDDEDVVVLPDLTVKPIEIERQNTVKKQINVYKTSQNNSFSFEGGIQRNSRKKHKKVVKDKDNEDISSVDIPKEIRLYEFADKIKKSSSEVIAKLFILGKMTTKNDFLEEDEIEILGAEFGIEVNIVDTKEDFDYVKAYEDEILEDNSVSRAPVVTIMGHVDHGKTSLLDYIRNSRVASGEAGGITQHVGAYMVEKSGKNITFIDTPGHEAFTAMRARGASVTDIVIIVVAADDGVKPQTKEAINHAKAAGVPIIIAINKMDKESANPDLVKTGLAELDILPTEWGGGYEFVPISAKTGIGIEDLLEIVLLQAELLELKANPDREAKATIIESSLQKGRGPVATAIVENGTLRVGDTIVAGVAYGKVRALQDDKGNSLKSIKPGECGVIIGLSEVPDAGETLISVKTDKEAREYAQKKYDYLRQKELSKSTKVTIDELSAKIAEGELKSLPVIIKADVQGSLEAIKASLEKLKNDEIKVDIIHSGVGGISQSDITLASASSNCVILGFNIRPTGDVKEKAKERSVEIKTYNVIYNLIDDVKALLSGLMSPIISEEELGQAVIRQVINVPKIGQIAGCMVTDGSINRGAKIRVIRDGVVVFEGNVSSLKRFKDDVKEVAKGYECGVGIEGYNDMREGDYIESYKEVESKVEL.

A disordered region spans residues 50 to 108; the sequence is VQSGKKPESPEKKDIKQNTQKEAPETQTQQKPIEQEVETKQNIDSTPIKVEPKQESLAS. A compositionally biased stretch (basic and acidic residues) spans 54-65; sequence KKPESPEKKDIK. Positions 66 to 81 are enriched in polar residues; it reads QNTQKEAPETQTQQKP. Positions 337-506 constitute a tr-type G domain; the sequence is SRAPVVTIMG…LLQAELLELK (170 aa). Residues 346 to 353 are G1; the sequence is GHVDHGKT. 346-353 provides a ligand contact to GTP; sequence GHVDHGKT. The interval 371 to 375 is G2; it reads GITQH. The tract at residues 392–395 is G3; that stretch reads DTPG. Residues 392–396 and 446–449 contribute to the GTP site; these read DTPGH and NKMD. Positions 446-449 are G4; the sequence is NKMD. Residues 482–484 form a G5 region; that stretch reads SAK.

This sequence belongs to the TRAFAC class translation factor GTPase superfamily. Classic translation factor GTPase family. IF-2 subfamily.

It is found in the cytoplasm. In terms of biological role, one of the essential components for the initiation of protein synthesis. Protects formylmethionyl-tRNA from spontaneous hydrolysis and promotes its binding to the 30S ribosomal subunits. Also involved in the hydrolysis of GTP during the formation of the 70S ribosomal complex. The protein is Translation initiation factor IF-2 of Campylobacter fetus subsp. fetus (strain 82-40).